A 391-amino-acid chain; its full sequence is Serine protease 7 (391 aa).

Positions methionine 1–alanine 27 are cleaved as a signal peptide. Residues glutamine 28 to lysine 136 constitute a propeptide, activation peptide. A Clip domain is found at serine 30 to cysteine 84. 3 disulfides stabilise this stretch: cysteine 31/cysteine 83, cysteine 41/cysteine 72, and cysteine 47/cysteine 84. The disordered stretch occupies residues glycine 91–leucine 121. Disulfide bonds link cysteine 128–cysteine 264, cysteine 167–cysteine 183, cysteine 211–cysteine 216, cysteine 310–cysteine 327, and cysteine 337–cysteine 366. In terms of domain architecture, Peptidase S1 spans valine 137–arginine 390. Asparagine 141 carries an N-linked (GlcNAc...) asparagine glycan. Histidine 182 functions as the Charge relay system in the catalytic mechanism. Ca(2+)-binding residues include glutamate 202, aspartate 204, lysine 207, and aspartate 210. The active-site Charge relay system is the aspartate 244. The active-site Charge relay system is serine 341.

This sequence belongs to the peptidase S1 family. CLIP subfamily. Interacts with Spn27A.

It localises to the secreted. Its function is as follows. Serine protease that, by cleaving and activating prophenoloxidase (PPO1) after immune challenge, plays an essential role in the melanization immune response to septic wounding. May function in diverse Hayan-dependent PPO1-activating cascades that are negatively controlled by different serpin proteins; Spn27A in the hemolymph and Spn77BA in the trachea. Important for the innate immune response to fungi. Regulation of melanization and PPO1 activation appears to be largely independent of the Toll signaling pathway. The protein is Serine protease 7 of Drosophila melanogaster (Fruit fly).